The following is a 466-amino-acid chain: Asparagine--tRNA ligase (466 aa).

It belongs to the class-II aminoacyl-tRNA synthetase family. As to quaternary structure, homodimer.

The protein resides in the cytoplasm. It carries out the reaction tRNA(Asn) + L-asparagine + ATP = L-asparaginyl-tRNA(Asn) + AMP + diphosphate + H(+). This Vibrio vulnificus (strain YJ016) protein is Asparagine--tRNA ligase.